A 418-amino-acid chain; its full sequence is UDP-N-acetylglucosamine 1-carboxyvinyltransferase 1 (418 aa).

Phosphoenolpyruvate is bound at residue 22–23 (KN). R94 contacts UDP-N-acetyl-alpha-D-glucosamine. Residue C118 is the Proton donor of the active site. The residue at position 118 (C118) is a 2-(S-cysteinyl)pyruvic acid O-phosphothioketal. UDP-N-acetyl-alpha-D-glucosamine is bound by residues 123–127 (RPIDL), D306, and I328.

It belongs to the EPSP synthase family. MurA subfamily.

It localises to the cytoplasm. The enzyme catalyses phosphoenolpyruvate + UDP-N-acetyl-alpha-D-glucosamine = UDP-N-acetyl-3-O-(1-carboxyvinyl)-alpha-D-glucosamine + phosphate. It participates in cell wall biogenesis; peptidoglycan biosynthesis. Its function is as follows. Cell wall formation. Adds enolpyruvyl to UDP-N-acetylglucosamine. This is UDP-N-acetylglucosamine 1-carboxyvinyltransferase 1 from Clostridium acetobutylicum (strain ATCC 824 / DSM 792 / JCM 1419 / IAM 19013 / LMG 5710 / NBRC 13948 / NRRL B-527 / VKM B-1787 / 2291 / W).